A 349-amino-acid polypeptide reads, in one-letter code: Hydroxymethylglutaryl-CoA synthase (349 aa).

Positions 30 and 31 each coordinate (3S)-3-hydroxy-3-methylglutaryl-CoA. The Proton donor/acceptor role is filled by glutamate 82. Residues cysteine 114 and threonine 155 each coordinate (3S)-3-hydroxy-3-methylglutaryl-CoA. Cysteine 114 (acyl-thioester intermediate) is an active-site residue. Arginine 203 is a CoA binding site. (3S)-3-hydroxy-3-methylglutaryl-CoA-binding residues include threonine 205 and histidine 238. Histidine 238 serves as the catalytic Proton donor/acceptor. A CoA-binding site is contributed by lysine 243. (3S)-3-hydroxy-3-methylglutaryl-CoA is bound by residues asparagine 270 and serine 300.

This sequence belongs to the thiolase-like superfamily. Archaeal HMG-CoA synthase family. In terms of assembly, interacts with acetoacetyl-CoA thiolase that catalyzes the precedent step in the pathway and with a DUF35 protein. The acetoacetyl-CoA thiolase/HMG-CoA synthase complex channels the intermediate via a fused CoA-binding site, which allows for efficient coupling of the endergonic thiolase reaction with the exergonic HMGCS reaction.

It carries out the reaction acetoacetyl-CoA + acetyl-CoA + H2O = (3S)-3-hydroxy-3-methylglutaryl-CoA + CoA + H(+). It functions in the pathway metabolic intermediate biosynthesis; (R)-mevalonate biosynthesis; (R)-mevalonate from acetyl-CoA: step 2/3. Catalyzes the condensation of acetyl-CoA with acetoacetyl-CoA to form 3-hydroxy-3-methylglutaryl-CoA (HMG-CoA). Functions in the mevalonate (MVA) pathway leading to isopentenyl diphosphate (IPP), a key precursor for the biosynthesis of isoprenoid compounds that are building blocks of archaeal membrane lipids. This chain is Hydroxymethylglutaryl-CoA synthase, found in Methanococcus maripaludis (strain DSM 14266 / JCM 13030 / NBRC 101832 / S2 / LL).